The sequence spans 108 residues: uncharacterized protein (108 aa).

The signal sequence occupies residues 1 to 16 (MKKLILIAIMASGLVA). Cysteine 17 carries the N-palmitoyl cysteine lipid modification. Residue cysteine 17 is the site of S-diacylglycerol cysteine attachment.

The protein localises to the cell membrane. This is an uncharacterized protein from Escherichia coli (strain K12).